A 597-amino-acid chain; its full sequence is MFASCHCVPRGRRTMKMIHFRSSSIKSLSQEMRCTIRLLDDSEISCHIQRETKGQFLIDHICNYYSLLEKDYFGIRYVDPEKQRHWLEPNKSIFKQMKTHPPYTMCFRVKFYPHEPLKIKEELTRYLLYLQIKRDIFHGRLLCSFSDAAYLGACIVQAELGDYDPDEHPENYISEFEIFPKQSQKLERKIVEIHKNELRGQSPPVAEFNLLLKAHTLETYGVDPHPCKDSTGTTTFLGFTAAGFVVFQGNKRIHLIKWPDVCKLKFEGKTFYVIGTQKEKKAMLAFHTSTPAACKHLWKCGVENQAFYKYAKSSQIKTVSSSKIFFKGSRFRYSGKVAKEVVEASSKIQREPPEVHRANITQSRSSHSLNKQLIINMEPLQPLLSSPSEQEEELPLGEGVPLPKEENISAPLISSSPVKAAQEYEDPPSEEEDKIKEEPLTISELVYNPSASLLPTPVDDDEIDMLFDCPSRLELEREDTDSFEDLEADENAFLIAEEEELKEARRALSWSYDILTGHIRVNPLVKSFSRLLVVGLGLLLFVFPLLLLLLESGIDLSFLCEIRQTPEFEQFHYEYYCPLKEWVTGKVHRILYMLGCS.

Residues 32–312 (MRCTIRLLDD…ENQAFYKYAK (281 aa)) form the FERM domain. The interval 409–435 (SAPLISSSPVKAAQEYEDPPSEEEDKI) is disordered. A compositionally biased stretch (acidic residues) spans 423-432 (EYEDPPSEEE). A helical transmembrane segment spans residues 531–551 (LLVVGLGLLLFVFPLLLLLLE).

Its subcellular location is the membrane. In terms of biological role, putative tumor suppressor gene that may be implicated in the origin and progression of lung cancer. This Pongo abelii (Sumatran orangutan) protein is FERM domain-containing protein 3 (FRMD3).